Reading from the N-terminus, the 251-residue chain is Fibroblast growth factor 23 (251 aa).

An N-terminal signal peptide occupies residues Met-1–Ala-24. Cys-95 and Cys-113 are disulfide-bonded. Residues Thr-171 and Thr-178 are each glycosylated (O-linked (GalNAc) threonine). Residues Arg-175–Val-251 form a disordered region. Residues Arg-179 to Pro-189 show a composition bias toward basic and acidic residues. Ser-180 carries the phosphoserine; by FAM20C modification.

Belongs to the heparin-binding growth factors family. As to quaternary structure, interacts with FGFR1, FGFR2, FGFR3 and FGFR4. Affinity between fibroblast growth factors (FGFs) and their receptors is increased by KL and heparan sulfate glycosaminoglycans that function as coreceptors. Following secretion this protein is inactivated by cleavage into a N-terminal fragment and a C-terminal fragment. The processing is effected by proprotein convertases. Post-translationally, O-glycosylated at Thr-171 and Thr-178 by GALNT3 and glycosylation of Thr-178 requires previous glycosylation at Thr171. Glycosylation is necessary for secretion; it blocks processing by proprotein convertases when the O-glycan is alpha 2,6-sialylated. Competition between proprotein convertase cleavage and block of cleavage by O-glycosylation determines the level of secreted active FGF23. In terms of processing, phosphorylation at Ser-180 mediated by FAM20C slows down glycosylation at Thr-178 notably. Expressed in the parathyroid.

The protein localises to the secreted. Functionally, regulator of phosphate homeostasis. Inhibits renal tubular phosphate transport by reducing SLC34A1 levels. Regulator of vitamin-D metabolism. Negatively regulates osteoblasts differentiation and matrix mineralization. Acts directly on the parathyroid to decrease PTH secretion. Up-regulates EGR1 expression in the presence of KL. The sequence is that of Fibroblast growth factor 23 (Fgf23) from Rattus norvegicus (Rat).